Here is a 288-residue protein sequence, read N- to C-terminus: 3-methyl-2-oxobutanoate hydroxymethyltransferase (288 aa).

The Mg(2+) site is built by D48 and D87. 3-methyl-2-oxobutanoate contacts are provided by residues 48-49, D87, and K116; that span reads DS. E118 is a Mg(2+) binding site. E185 (proton acceptor) is an active-site residue.

The protein belongs to the PanB family. In terms of assembly, homodecamer; pentamer of dimers. Mg(2+) is required as a cofactor.

The protein localises to the cytoplasm. The catalysed reaction is 3-methyl-2-oxobutanoate + (6R)-5,10-methylene-5,6,7,8-tetrahydrofolate + H2O = 2-dehydropantoate + (6S)-5,6,7,8-tetrahydrofolate. Its pathway is cofactor biosynthesis; coenzyme A biosynthesis. Its function is as follows. Catalyzes the reversible reaction in which hydroxymethyl group from 5,10-methylenetetrahydrofolate is transferred onto alpha-ketoisovalerate to form ketopantoate. This chain is 3-methyl-2-oxobutanoate hydroxymethyltransferase, found in Hyperthermus butylicus (strain DSM 5456 / JCM 9403 / PLM1-5).